Consider the following 523-residue polypeptide: 2-isopropylmalate synthase (523 aa).

The region spanning Val-5 to Trp-267 is the Pyruvate carboxyltransferase domain. Residues Asp-14, His-202, His-204, and Asn-238 each coordinate Mn(2+). The segment at Arg-392–Val-523 is regulatory domain.

It belongs to the alpha-IPM synthase/homocitrate synthase family. LeuA type 1 subfamily. In terms of assembly, homodimer. Requires Mn(2+) as cofactor.

The protein resides in the cytoplasm. The catalysed reaction is 3-methyl-2-oxobutanoate + acetyl-CoA + H2O = (2S)-2-isopropylmalate + CoA + H(+). Its pathway is amino-acid biosynthesis; L-leucine biosynthesis; L-leucine from 3-methyl-2-oxobutanoate: step 1/4. Functionally, catalyzes the condensation of the acetyl group of acetyl-CoA with 3-methyl-2-oxobutanoate (2-ketoisovalerate) to form 3-carboxy-3-hydroxy-4-methylpentanoate (2-isopropylmalate). The chain is 2-isopropylmalate synthase from Escherichia coli (strain SMS-3-5 / SECEC).